Here is a 195-residue protein sequence, read N- to C-terminus: Group XIIB secretory phospholipase A2-like protein (195 aa).

Positions 1–19 (MKLLCGFFLLWLGLVGNLA) are cleaved as a signal peptide. Ca(2+)-binding residues include S89, Y91, L93, and D116.

The protein belongs to the phospholipase A2 family. Ca(2+) serves as cofactor.

The protein resides in the secreted. Not known; does not seem to have catalytic activity. The polypeptide is Group XIIB secretory phospholipase A2-like protein (Pla2g12b) (Mus musculus (Mouse)).